Consider the following 66-residue polypeptide: Large ribosomal subunit protein uL29 (66 aa).

Belongs to the universal ribosomal protein uL29 family.

The chain is Large ribosomal subunit protein uL29 from Mesorhizobium japonicum (strain LMG 29417 / CECT 9101 / MAFF 303099) (Mesorhizobium loti (strain MAFF 303099)).